The primary structure comprises 147 residues: Fibromodulin (147 aa).

6 LRR repeats span residues 1–15, 16–37, 40–61, 63–84, 85–105, and 108–128; these read LDHN…PLPR, SLRE…ALEG, NLTA…MRGL, SLIL…LPSA, LEQL…YFRG, and KLLY…ASNT. N-linked (GlcNAc...) (keratan sulfate) asparagine glycosylation occurs at Asn-5. Asn-40 carries an N-linked (GlcNAc...) (keratan sulfate) asparagine glycan. An N-linked (GlcNAc...) (keratan sulfate) asparagine glycan is attached at Asn-130. An LRR 7 repeat occupies 133 to 147; that stretch reads SLLELDLSYNQLQKI.

Belongs to the small leucine-rich proteoglycan (SLRP) family. SLRP class II subfamily. Binds to type I and type II collagen. Post-translationally, binds keratan sulfate chains.

It localises to the secreted. The protein resides in the extracellular space. Its subcellular location is the extracellular matrix. Affects the rate of fibrils formation. May have a primary role in collagen fibrillogenesis. This Sus scrofa (Pig) protein is Fibromodulin (FMOD).